Consider the following 278-residue polypeptide: Thiazole synthase (278 aa).

The active-site Schiff-base intermediate with DXP is Lys-107. 1-deoxy-D-xylulose 5-phosphate is bound by residues Gly-168, 194-195 (AG), and 216-217 (AS).

This sequence belongs to the ThiG family. In terms of assembly, homotetramer. Forms heterodimers with either ThiH or ThiS.

It is found in the cytoplasm. The catalysed reaction is [ThiS sulfur-carrier protein]-C-terminal-Gly-aminoethanethioate + 2-iminoacetate + 1-deoxy-D-xylulose 5-phosphate = [ThiS sulfur-carrier protein]-C-terminal Gly-Gly + 2-[(2R,5Z)-2-carboxy-4-methylthiazol-5(2H)-ylidene]ethyl phosphate + 2 H2O + H(+). The protein operates within cofactor biosynthesis; thiamine diphosphate biosynthesis. Catalyzes the rearrangement of 1-deoxy-D-xylulose 5-phosphate (DXP) to produce the thiazole phosphate moiety of thiamine. Sulfur is provided by the thiocarboxylate moiety of the carrier protein ThiS. In vitro, sulfur can be provided by H(2)S. The sequence is that of Thiazole synthase from Corynebacterium urealyticum (strain ATCC 43042 / DSM 7109).